Reading from the N-terminus, the 381-residue chain is Terpene cyclase ATR13 (381 aa).

The protein belongs to the terpene synthase family.

The protein operates within mycotoxin biosynthesis. Functionally, terpene cyclase; part of the core atranone cluster (CAC) which products are predicted to catalyze most or all steps of mycotoxin atranone synthesis, starting from geranylgeranyl pyrophosphate (GGPP). The initial cyclization of GGPP to dolabellane is probably performed by the terpene cyclase ATR13. The Baeyer-Villiger oxidation near the end of the atranone synthesis, which converts atranones D and E to atranones F and G is predicted to be catalyzed by the monooxygenase ATR8. Of the CAC's other predicted gene products, the reducing PKS ATR6 might synthesize a polyketide chain. This polyketide is probably transferred onto the atranone backbone by the polyketide transferase ATR5. Other predicted CAC products include 4 oxygenases (ATR2, ATR3, ATR4, and ATR14), 3 short-chain reductases (ATR7, ATR9, and ATR10), and a methyltransferase (ATR12). These may all be involved in the various steps of atranone biosynthesis, although their specific roles must await experimental determination. This chain is Terpene cyclase ATR13, found in Stachybotrys chlorohalonatus (strain IBT 40285).